The sequence spans 599 residues: MSLLKIYWRAMQYLAVERTATITMCVASVLVALVTLAEPVLFGRVIQSISDKGDIFSPLLMWAALGGFNIMAAVFVARGADRLAHRRRLGVMIDSYERLITMPLAWHQKRGTSNALHTLIRATDSLFTLWLEFMRQHLTTVVALATLIPVAMTMDMRMSLVLIVLGVIYVMIGQLVMRKTKDGQAAVEKHHHKLFEHVSDTISNVSVVQSYNRIASETQALRDYAKNLENAQFPVLNWWALASGLNRMASTFSMVVVLVLGAYFVTKGQMRVGDVIAFIGFAQLMIGRLDQISAFINQTVTARAKLEEFFQMEDATADRQEPENVADLNDVKGDIVFDNVTYEFPNSGQGVYDVSFEVKPGQTVAIVGPTGAGKTTLINLLQRVFDPAAGRIMIDGTDTRTVSRRSLRHAIATVFQDAGLFNRSVEDNIRVGRANATHEEVHAAAKAAAAHDFILAKSEGYDTFVGERGSQLSGGERQRLAIARAILKDSPILVLDEATSALDVETEEKVTQAVDELSHNRTTFIIAHRLSTVRSADLVLFMDKGHLVESGSFNELAERGGRFSDLLRAGGLKLEDKQPKQPVVEGSNVMPFPVKGAVA.

Positions Thr-21–Thr-301 constitute an ABC transmembrane type-1 domain. 5 consecutive transmembrane segments (helical) span residues Ile-22 to Phe-42, Ile-55 to Phe-75, Met-156 to Val-176, Met-248 to Gly-268, and Ile-276 to Ile-296. The region spanning Ile-335–Ala-569 is the ABC transporter domain. Gly-368–Thr-375 serves as a coordination point for ATP.

The protein belongs to the ABC transporter superfamily. Beta-(1--&gt;2)glucan exporter (TC 3.A.1.108.1) family. Homodimer.

It localises to the cell inner membrane. The enzyme catalyses [(1-&gt;2)-beta-D-glucosyl](n)(in) + ATP + H2O = [(1-&gt;2)-beta-D-glucosyl](n)(out) + ADP + phosphate + H(+). Its function is as follows. Involved in beta-(1--&gt;2)glucan export. Its export to the periplasmic space is required to exert its action as a virulence factor. Transmembrane domains (TMD) form a pore in the inner membrane and the ATP-binding domain (NBD) is responsible for energy generation. The protein is Beta-(1--&gt;2)glucan export ATP-binding/permease protein NdvA of Brucella abortus (strain 2308).